A 193-amino-acid polypeptide reads, in one-letter code: MADQVICALSDVFARWFAYQQQRGIQVCCPEDELRPSPCRYDAQHPERWKPWSRPEMSDLQNIASALECVFHPAIHAYYGHGYAGQITASFKGLAVTLVQPWNEEDFERLQQNLVAHVLMLRRLKLPITLFLATVSDESRVISLDNETGEVVLEQLGKKKRWVLADSLPAFLQRLSPLAQTAVTPAVPVNLPA.

Belongs to the Syd family.

The protein localises to the cell inner membrane. In terms of biological role, interacts with the SecY protein in vivo. May bind preferentially to an uncomplexed state of SecY, thus functioning either as a chelating agent for excess SecY in the cell or as a regulatory factor that negatively controls the translocase function. This chain is Protein Syd, found in Tolumonas auensis (strain DSM 9187 / NBRC 110442 / TA 4).